The following is a 273-amino-acid chain: Proteasome subunit beta (273 aa).

Positions 1–50 (MRKDGARLALPLFDPRHDPGPDFAALVSRDAARTVPTSGDGSLGAQVPHG) are cleaved as a propeptide — removed in mature form; by autocatalysis. T51 serves as the catalytic Nucleophile.

This sequence belongs to the peptidase T1B family. The 20S proteasome core is composed of 14 alpha and 14 beta subunits that assemble into four stacked heptameric rings, resulting in a barrel-shaped structure. The two inner rings, each composed of seven catalytic beta subunits, are sandwiched by two outer rings, each composed of seven alpha subunits. The catalytic chamber with the active sites is on the inside of the barrel. Has a gated structure, the ends of the cylinder being occluded by the N-termini of the alpha-subunits. Is capped by the proteasome-associated ATPase, ARC.

It localises to the cytoplasm. It catalyses the reaction Cleavage of peptide bonds with very broad specificity.. The protein operates within protein degradation; proteasomal Pup-dependent pathway. Its activity is regulated as follows. The formation of the proteasomal ATPase ARC-20S proteasome complex, likely via the docking of the C-termini of ARC into the intersubunit pockets in the alpha-rings, may trigger opening of the gate for substrate entry. Interconversion between the open-gate and close-gate conformations leads to a dynamic regulation of the 20S proteasome proteolysis activity. Its function is as follows. Component of the proteasome core, a large protease complex with broad specificity involved in protein degradation. The protein is Proteasome subunit beta of Acidimicrobium ferrooxidans (strain DSM 10331 / JCM 15462 / NBRC 103882 / ICP).